A 134-amino-acid chain; its full sequence is Snaclec alboaggregin-A subunit alpha' (134 aa).

One can recognise a C-type lectin domain in the interval 1-134 (DFHCLPGWSA…NPFVCKFPPQ (134 aa)). 3 disulfides stabilise this stretch: cysteine 4–cysteine 15, cysteine 32–cysteine 129, and cysteine 104–cysteine 121.

This sequence belongs to the snaclec family. As to quaternary structure, heterotetramer of the subunits alpha, alpha', beta and beta'; disulfide-linked. As to expression, expressed by the venom gland.

It is found in the secreted. Potent platelet activator that aggregates platelets via both GPIbalpha (GP1BA) and GPVI (GP6). Induces a tyrosine phosphorylation profile in platelets that resembles this produced by collagen, involving the time dependent tyrosine phosphorylation of Fc receptor gamma chain (FCGR1A), phospholipase Cgamma2 (PLCG2), and LAT. The polypeptide is Snaclec alboaggregin-A subunit alpha' (Trimeresurus albolabris (White-lipped pit viper)).